Here is a 301-residue protein sequence, read N- to C-terminus: Mitochondrial carnitine/acylcarnitine carrier protein (301 aa).

Ala-2 carries the post-translational modification N-acetylalanine. Residues 2 to 12 (ADEPKPISPFK) are Cytoplasmic-facing. Solcar repeat units follow at residues 8-99 (ISPF…GKKL), 108-196 (LSYP…LKNL), and 207-293 (LSVP…AMKF). The chain crosses the membrane as a helical span at residues 13-31 (NLLAGGFGGMCLVFVGHPL). Residues 32-73 (DTVKVRLQTQPPSLSGQPPMYSGTLDCFRKTLMREGITGLYR) are Mitochondrial matrix-facing. The helical transmembrane segment at 74 to 93 (GMAAPIIGVTPMFAVCFFGF) threads the bilayer. The Cytoplasmic segment spans residues 94–112 (GLGKKLQQKSPEDELSYPQ). The chain crosses the membrane as a helical span at residues 113 to 131 (LFTAGMLSGVFTTGIMTPG). Topologically, residues 132 to 170 (ERIKCLLQIQASSGENKYSGTLDCAKKLYQEFGIRGFYK) are mitochondrial matrix. Lys-148 and Lys-157 each carry N6-acetyllysine. The residue at position 170 (Lys-170) is an N6-acetyllysine; alternate. Lys-170 is modified (N6-succinyllysine; alternate). A helical membrane pass occupies residues 171-190 (GTVLTLMRDVPASGMYFMTY). Residues 191–211 (EWLKNLFTPEGKSVSDLSVPR) are Cytoplasmic-facing. A helical membrane pass occupies residues 212 to 230 (ILVAGGFAGIFNWAVAIPP). At 231–267 (DVLKSRFQTAPPGKYPNGFRDVLRELIREEGVTSLYK) the chain is on the mitochondrial matrix side. A helical membrane pass occupies residues 268–287 (GFNAVMIRAFPANAACFLGF). At 288–301 (EIAMKFLNWIAPNL) the chain is on the cytoplasmic side.

Belongs to the mitochondrial carrier (TC 2.A.29) family. In terms of tissue distribution, widely expressed, with highest levels in the liver, intermediate levels in heart, testis and kidney and low levels in brain, including cortex, cerebellum, hippocampus and hypothalamus.

The protein localises to the mitochondrion inner membrane. The catalysed reaction is O-acetyl-(R)-carnitine(in) + (R)-carnitine(out) = O-acetyl-(R)-carnitine(out) + (R)-carnitine(in). The enzyme catalyses an O-acyl-(R)-carnitine(in) + (R)-carnitine(out) = an O-acyl-(R)-carnitine(out) + (R)-carnitine(in). It catalyses the reaction O-propanoyl-(R)-carnitine(in) + (R)-carnitine(out) = O-propanoyl-(R)-carnitine(out) + (R)-carnitine(in). It carries out the reaction O-hexadecanoyl-(R)-carnitine(in) + (R)-carnitine(out) = O-hexadecanoyl-(R)-carnitine(out) + (R)-carnitine(in). The catalysed reaction is O-octanoyl-(R)-carnitine(in) + (R)-carnitine(out) = O-octanoyl-(R)-carnitine(out) + (R)-carnitine(in). The enzyme catalyses (R)-carnitine(in) = (R)-carnitine(out). Mediates the electroneutral exchange of acylcarnitines (O-acyl-(R)-carnitine or L-acylcarnitine) of different acyl chain lengths (ranging from O-acetyl-(R)-carnitine to long-chain O-acyl-(R)-carnitines) with free carnitine ((R)-carnitine or L-carnitine) across the mitochondrial inner membrane, via a ping-pong mechanism. Key player in the mitochondrial oxidation pathway, it translocates the fatty acids in the form of acylcarnitines into the mitochondrial matrix, where the carnitine palmitoyltransferase 2 (CPT-2) activates them to undergo fatty acid beta-oxidation. Catalyzes the unidirectional transport (uniport) of carnitine at lower rates than the antiport (exchange). The protein is Mitochondrial carnitine/acylcarnitine carrier protein of Mus musculus (Mouse).